The primary structure comprises 259 residues: uncharacterized protein (259 aa).

It belongs to the ParA family.

This is an uncharacterized protein from Methanocaldococcus jannaschii (strain ATCC 43067 / DSM 2661 / JAL-1 / JCM 10045 / NBRC 100440) (Methanococcus jannaschii).